Reading from the N-terminus, the 269-residue chain is Tungstate-binding protein TupA (269 aa).

Residues 1-17 (MKKIISLALALALSASA) form the signal peptide.

As to quaternary structure, the complex is composed of two ATP-binding proteins (TupC), two transmembrane proteins (TupB) and a solute-binding protein (TupA).

The protein resides in the periplasm. Its function is as follows. Part of an ABC transporter complex involved in ultra-high affinity tungstate uptake. Specifically binds tungstate. This chain is Tungstate-binding protein TupA, found in Campylobacter jejuni subsp. jejuni serotype O:2 (strain ATCC 700819 / NCTC 11168).